The chain runs to 419 residues: L-rhamnose isomerase (419 aa).

His262, Asp294, and Asp296 together coordinate Mn(2+).

It belongs to the rhamnose isomerase family. Homotetramer. Mn(2+) is required as a cofactor.

It is found in the cytoplasm. It catalyses the reaction L-rhamnopyranose = L-rhamnulose. The protein operates within carbohydrate degradation; L-rhamnose degradation; glycerone phosphate from L-rhamnose: step 1/3. Catalyzes the interconversion of L-rhamnose and L-rhamnulose. This chain is L-rhamnose isomerase, found in Salmonella agona (strain SL483).